Reading from the N-terminus, the 425-residue chain is MEKYIKEHTLKPNEIERYGRQLITPDIGVSGQMSLCNSSVLIIGAGGLGCPVALYLSSAGIGTLGLVDYDTVEISNLHRQIGHRESSKGISKAVSLSKTISELNSLIKVNTYETTFTSETAMEIIKNYDIVVDASDNVATRYLVNDACVLTGKPLVSGSALKWEGQITCYNYNNGPCYRCIFPTPPPVETVTKCSDGGVLGPIVGVIGSLQALEVIKILTNNKEGVLSGRLLIYDGMSAVFRTVRIRGKQSGCNVCGDKPTVTQLIDYTQFCQSNYSESAGKVDDRVDKTLIITVEQFNQSIKNNNNNHLLIDVRPKIQFDICSLPNSNNIPIEEIDKKESIEIIEKLIKEKVENNNNNNNNNENRDASDELSVYLVCRRGNKSQDAVKILDEKLKEFRDKFKLLHIKDGLLGWNESIDDSFPIY.

Residues Gly47, Asp68, 75-79 (SNLHR), Lys92, and 136-137 (DN) each bind ATP. Zn(2+)-binding residues include Cys177 and Cys180. Cys194 acts as the Glycyl thioester intermediate; for adenylyltransferase activity in catalysis. 2 residues coordinate Zn(2+): Cys253 and Cys256. Positions 305–423 (NNNNHLLIDV…WNESIDDSFP (119 aa)) constitute a Rhodanese domain. Cys378 acts as the Cysteine persulfide intermediate; for sulfurtransferase activity in catalysis.

The protein in the N-terminal section; belongs to the HesA/MoeB/ThiF family. UBA4 subfamily. It depends on Zn(2+) as a cofactor.

It localises to the cytoplasm. The protein resides in the cytosol. The enzyme catalyses [molybdopterin-synthase sulfur-carrier protein]-C-terminal Gly-Gly + ATP + H(+) = [molybdopterin-synthase sulfur-carrier protein]-C-terminal Gly-Gly-AMP + diphosphate. The catalysed reaction is [molybdopterin-synthase sulfur-carrier protein]-C-terminal Gly-Gly-AMP + S-sulfanyl-L-cysteinyl-[cysteine desulfurase] + AH2 = [molybdopterin-synthase sulfur-carrier protein]-C-terminal-Gly-aminoethanethioate + L-cysteinyl-[cysteine desulfurase] + A + AMP + 2 H(+). The protein operates within tRNA modification; 5-methoxycarbonylmethyl-2-thiouridine-tRNA biosynthesis. Its pathway is cofactor biosynthesis; molybdopterin biosynthesis. Plays a central role in 2-thiolation of mcm(5)S(2)U at tRNA wobble positions of cytosolic tRNA(Lys), tRNA(Glu) and tRNA(Gln). Also essential during biosynthesis of the molybdenum cofactor. Acts by mediating the C-terminal thiocarboxylation of sulfur carriers urm1 and mocs2a. Its N-terminus first activates urm1 and mocs2a as acyl-adenylates (-COAMP), then the persulfide sulfur on the catalytic cysteine is transferred to urm1 and mocs2a to form thiocarboxylation (-COSH) of their C-terminus. The reaction probably involves hydrogen sulfide that is generated from the persulfide intermediate and that acts as a nucleophile towards urm1 and mocs2a. Subsequently, a transient disulfide bond is formed. Does not use thiosulfate as sulfur donor; nfs1 probably acting as a sulfur donor for thiocarboxylation reactions. The chain is Adenylyltransferase and sulfurtransferase MOCS3 (mocs3) from Dictyostelium discoideum (Social amoeba).